A 433-amino-acid polypeptide reads, in one-letter code: Serine hydroxymethyltransferase (433 aa).

Alanine 121–valine 123 is a binding site for (6S)-5,6,7,8-tetrahydrofolate. Residue lysine 227 is modified to N6-(pyridoxal phosphate)lysine. Glutamate 243 contributes to the (6S)-5,6,7,8-tetrahydrofolate binding site.

It belongs to the SHMT family. In terms of assembly, homodimer. Pyridoxal 5'-phosphate is required as a cofactor.

It is found in the cytoplasm. Its pathway is amino-acid biosynthesis; glycine biosynthesis; glycine from L-serine: step 1/1. In terms of biological role, catalyzes the reversible interconversion of serine and glycine with a modified folate serving as the one-carbon carrier. Also exhibits a pteridine-independent aldolase activity toward beta-hydroxyamino acids, producing glycine and aldehydes, via a retro-aldol mechanism. The protein is Serine hydroxymethyltransferase of Saccharolobus islandicus (strain Y.N.15.51 / Yellowstone #2) (Sulfolobus islandicus).